The following is a 65-amino-acid chain: Hirudin-3A (65 aa).

Residues 1–3 (VVY) are interaction with thrombin active site. Intrachain disulfides connect Cys-6–Cys-14, Cys-16–Cys-28, and Cys-22–Cys-39. The segment at 39-65 (CVTGEGTPKPQSHNDGDFEEIPEEYLQ) is disordered. An O-linked (GalNAc...) threonine glycan is attached at Thr-45. Residues 55-65 (DFEEIPEEYLQ) are interaction with fibrinogen-binding exosite of thrombin. The segment covering 55–65 (DFEEIPEEYLQ) has biased composition (acidic residues). At Tyr-63 the chain carries Sulfotyrosine.

This sequence belongs to the protease inhibitor I14 (hirudin) family.

The protein resides in the secreted. Functionally, hirudin is a potent thrombin-specific protease inhibitor. It forms a stable non-covalent complex with alpha-thrombin, thereby abolishing its ability to cleave fibrinogen. In Hirudo medicinalis (Medicinal leech), this protein is Hirudin-3A.